We begin with the raw amino-acid sequence, 319 residues long: Syntaxin ufe1 (319 aa).

Residues 1-297 (MTSRTNEFFG…IKAKSRSSRT (297 aa)) are Cytoplasmic-facing. Residues 228–290 (LQEFEHTMER…SGGNQQLIKA (63 aa)) enclose the t-SNARE coiled-coil homology domain. A helical; Anchor for type IV membrane protein transmembrane segment spans residues 298-315 (ARLLFCIFTVMGLLLLSL). Over 316–319 (DRIV) the chain is Lumenal.

The protein belongs to the syntaxin family. As to quaternary structure, component of a SNARE complex consisting of ufe1, use1, sec20 and sec22 or ykt6. Interacts with sad1.

The protein localises to the endoplasmic reticulum membrane. In terms of biological role, syntaxin required for targeting and fusion of Golgi-derived retrograde transport vesicles with the ER. The chain is Syntaxin ufe1 (ufe1) from Schizosaccharomyces pombe (strain 972 / ATCC 24843) (Fission yeast).